The following is a 240-amino-acid chain: UDP-2,3-diacylglucosamine hydrolase (240 aa).

Mn(2+) is bound by residues D8, H10, D41, N79, and H114. Position 79-80 (79-80 (NR)) interacts with substrate. Substrate is bound by residues D122, S160, N164, K167, and H195. Mn(2+) is bound by residues H195 and H197.

The protein belongs to the LpxH family. It depends on Mn(2+) as a cofactor.

It localises to the cell inner membrane. It catalyses the reaction UDP-2-N,3-O-bis[(3R)-3-hydroxytetradecanoyl]-alpha-D-glucosamine + H2O = 2-N,3-O-bis[(3R)-3-hydroxytetradecanoyl]-alpha-D-glucosaminyl 1-phosphate + UMP + 2 H(+). Its pathway is glycolipid biosynthesis; lipid IV(A) biosynthesis; lipid IV(A) from (3R)-3-hydroxytetradecanoyl-[acyl-carrier-protein] and UDP-N-acetyl-alpha-D-glucosamine: step 4/6. Hydrolyzes the pyrophosphate bond of UDP-2,3-diacylglucosamine to yield 2,3-diacylglucosamine 1-phosphate (lipid X) and UMP by catalyzing the attack of water at the alpha-P atom. Involved in the biosynthesis of lipid A, a phosphorylated glycolipid that anchors the lipopolysaccharide to the outer membrane of the cell. This is UDP-2,3-diacylglucosamine hydrolase from Pectobacterium carotovorum subsp. carotovorum (strain PC1).